The primary structure comprises 426 residues: D-tagatose-1,6-bisphosphate aldolase subunit KbaZ (426 aa).

Belongs to the GatZ/KbaZ family. KbaZ subfamily. In terms of assembly, forms a complex with KbaY.

The protein operates within carbohydrate metabolism; D-tagatose 6-phosphate degradation; D-glyceraldehyde 3-phosphate and glycerone phosphate from D-tagatose 6-phosphate: step 2/2. Component of the tagatose-1,6-bisphosphate aldolase KbaYZ that is required for full activity and stability of the Y subunit. Could have a chaperone-like function for the proper and stable folding of KbaY. When expressed alone, KbaZ does not show any aldolase activity. This is D-tagatose-1,6-bisphosphate aldolase subunit KbaZ from Escherichia coli O8 (strain IAI1).